Here is a 219-residue protein sequence, read N- to C-terminus: uncharacterized protein (219 aa).

The protein to T.pallidum TP_0126.

This is an uncharacterized protein from Treponema pallidum (strain Nichols).